Reading from the N-terminus, the 259-residue chain is Haloacid dehalogenase-like hydrolase domain-containing protein 2 (259 aa).

Positions 13 and 15 each coordinate Mg(2+). Residues 13 to 15 (DLS) and 46 to 47 (TN) contribute to the substrate site. Positions 49–71 (TKESKRDLLERLRKLEFDISEEE) form a coiled coil. Lys50 is subject to N6-succinyllysine. Lys179 serves as a coordination point for substrate. Asp204 provides a ligand contact to Mg(2+).

Belongs to the HAD-like hydrolase superfamily. The cofactor is Mg(2+).

In Rattus norvegicus (Rat), this protein is Haloacid dehalogenase-like hydrolase domain-containing protein 2 (Hdhd2).